The sequence spans 414 residues: Putative F-box/kelch-repeat protein At2g29800 (414 aa).

The interval 1-61 is disordered; that stretch reads MASISETSDD…EVENVPPIPR (61 aa). Residues 20–35 are compositionally biased toward basic and acidic residues; that stretch reads KPEEPHKNPQEEKENQ. Residues 40–54 are compositionally biased toward acidic residues; it reads NEADEEDDHQDEEVE. The region spanning 58–105 is the F-box domain; the sequence is PIPRKIPPVLIENTIAPLRRCHYPKLSLLSNAFRQVISSEDLFQVRSL. Kelch repeat units lie at residues 163-211, 212-258, 263-302, and 305-349; these read KIYV…VIDG, RIYV…IVHV, KIYI…SCVV, and LLYA…SKMA.

The polypeptide is Putative F-box/kelch-repeat protein At2g29800 (Arabidopsis thaliana (Mouse-ear cress)).